Reading from the N-terminus, the 260-residue chain is Exosome complex component Rrp4 (260 aa).

Positions 59–128 constitute an S1 motif domain; that stretch reads NDVVIGIVIV…SSMKVELALR (70 aa). A KH domain is found at 136–194; that stretch reads KTGQIIKVESVKVPRVIGHGGSMISMLKKETNCSIFVGQNGRIWIDGKDEDIELLSKAL.

Belongs to the RRP4 family. In terms of assembly, component of the archaeal exosome complex. Forms a trimer of Rrp4 and/or Csl4 subunits. The trimer associates with a hexameric ring-like arrangement composed of 3 Rrp41-Rrp42 heterodimers.

It localises to the cytoplasm. Non-catalytic component of the exosome, which is a complex involved in RNA degradation. Increases the RNA binding and the efficiency of RNA degradation. Confers strong poly(A) specificity to the exosome. This chain is Exosome complex component Rrp4, found in Methanosarcina acetivorans (strain ATCC 35395 / DSM 2834 / JCM 12185 / C2A).